Here is an 877-residue protein sequence, read N- to C-terminus: Leucine--tRNA ligase (877 aa).

A 'HIGH' region motif is present at residues 43–53 (PYPSGRIHMGH). The short motif at 628–632 (KMSKS) is the 'KMSKS' region element. Lys-631 provides a ligand contact to ATP.

This sequence belongs to the class-I aminoacyl-tRNA synthetase family.

Its subcellular location is the cytoplasm. It catalyses the reaction tRNA(Leu) + L-leucine + ATP = L-leucyl-tRNA(Leu) + AMP + diphosphate. In Brucella abortus biovar 1 (strain 9-941), this protein is Leucine--tRNA ligase.